A 387-amino-acid chain; its full sequence is GTP-binding protein 10 (387 aa).

The region spanning 13–148 is the Obg domain; sequence GNFIDKLRLF…RIIHLDLKLI (136 aa). The OBG-type G domain maps to 149-344; sequence ADVGLVGFPN…LKNCIRKSLD (196 aa). Residues 155–162, 202–206, and 278–281 contribute to the GTP site; these read GFPNAGKS, DLPGL, and NKMD.

The protein belongs to the TRAFAC class OBG-HflX-like GTPase superfamily. OBG GTPase family.

Its subcellular location is the nucleus. It is found in the nucleolus. The protein localises to the chromosome. Functionally, may be involved in the ribosome maturation process. Complements an ObgE(CgtA) function in E.coli ribosome maturation. Plays a role of GTPase in vitro. When missing, disorganization of the nucleolar architecture is observed. The sequence is that of GTP-binding protein 10 (GTPBP10) from Homo sapiens (Human).